A 534-amino-acid polypeptide reads, in one-letter code: Acyl-CoA-binding domain-containing protein 5 (534 aa).

In terms of domain architecture, ACB spans 41–130; that stretch reads HETRFEAAVK…MKKIIETMPM (90 aa). An an acyl-CoA-binding site is contributed by 52 to 61; it reads IQSLPKNGSF. Position 63 is a phosphothreonine (P63). Residues 72–76, K98, and Y117 each bind an acyl-CoA; that span reads YSFYK. Residues L137 and E172 each carry the phosphothreonine modification. The disordered stretch occupies residues 181-225; that stretch reads TPNAKTVNGKAESSDSGAESEEEEAQEEVKGAEQSDNDKKMMKKS. The stretch at 190 to 219 forms a coiled coil; that stretch reads KAESSDSGAESEEEEAQEEVKGAEQSDNDK. Phosphoserine is present on residues S193, S194, S196, S200, S215, S279, and S313. Residues 207–225 are compositionally biased toward basic and acidic residues; that stretch reads EEVKGAEQSDNDKKMMKKS. The span at 376–385 shows a compositional bias: basic and acidic residues; it reads EVKHGGEDGR. Residues 376–442 form a disordered region; sequence EVKHGGEDGR…ERWGSDRGSR (67 aa). T400 carries the phosphothreonine modification. A Phosphoserine modification is found at S428. The span at 431 to 441 shows a compositional bias: basic and acidic residues; the sequence is DGERWGSDRGS. Residues 447 to 476 are a coiled coil; the sequence is EQIALVLMRLQEDMQNVLQRLQKLETLTAL. K469 carries the post-translational modification N6-acetyllysine. Residues 506 to 526 form a helical membrane-spanning segment; the sequence is GVLTFAIIWPFIAQWLVYLYY.

It belongs to the ATG37 family.

Its subcellular location is the peroxisome membrane. In terms of biological role, acyl-CoA binding protein which acts as the peroxisome receptor for pexophagy but is dispensable for aggrephagy and nonselective autophagy. Binds medium- and long-chain acyl-CoA esters. This Homo sapiens (Human) protein is Acyl-CoA-binding domain-containing protein 5 (ACBD5).